The primary structure comprises 183 residues: Dual-action ribosomal maturation protein DarP (183 aa).

Belongs to the DarP family.

The protein localises to the cytoplasm. Its function is as follows. Member of a network of 50S ribosomal subunit biogenesis factors which assembles along the 30S-50S interface, preventing incorrect 23S rRNA structures from forming. Promotes peptidyl transferase center (PTC) maturation. The polypeptide is Dual-action ribosomal maturation protein DarP (Escherichia coli O6:H1 (strain CFT073 / ATCC 700928 / UPEC)).